Reading from the N-terminus, the 720-residue chain is Protein-glutamine gamma-glutamyltransferase 5 (720 aa).

Ala2 bears the N-acetylalanine mark. Active-site residues include Cys278, His337, and Asp360. Asn400, Asp402, Glu448, and Glu453 together coordinate Ca(2+). The disordered stretch occupies residues 470 to 499 (HGSQRGAELQPSRPTSLSQDSPRSLHTPSL). Residues 481 to 496 (SRPTSLSQDSPRSLHT) show a composition bias toward polar residues.

This sequence belongs to the transglutaminase superfamily. Transglutaminase family. Ca(2+) is required as a cofactor. As to expression, expressed in foreskin keratinocytes.

It is found in the cytoplasm. It catalyses the reaction L-glutaminyl-[protein] + L-lysyl-[protein] = [protein]-L-lysyl-N(6)-5-L-glutamyl-[protein] + NH4(+). Its function is as follows. Catalyzes the cross-linking of proteins and the conjugation of polyamines to proteins. Contributes to the formation of the cornified cell envelope of keratinocytes. In Homo sapiens (Human), this protein is Protein-glutamine gamma-glutamyltransferase 5 (TGM5).